The primary structure comprises 558 residues: Deleted in azoospermia protein 2 (558 aa).

Residues 1-10 (MSAANPETPN) show a composition bias toward polar residues. Residues 1–27 (MSAANPETPNSTISREASTQSSSAAAS) are disordered. A compositionally biased stretch (low complexity) spans 11-27 (STISREASTQSSSAAAS). Residues 40-115 (NTVFVGGIDA…KKLKLGPAIR (76 aa)) form the RRM domain. DAZ domains follow at residues 167 to 190 (AYSA…YNYQ), 191 to 214 (EYPT…YNYQ), 215 to 238 (PFPA…YNYQ), 239 to 262 (AFPA…YNYQ), 263 to 286 (PFPA…YNYQ), 287 to 310 (AFPA…YNYQ), 311 to 334 (AFPA…YNYQ), 335 to 358 (AFPA…YNYQ), 359 to 382 (AFPA…YNYQ), 383 to 406 (AFPA…YNYQ), 407 to 430 (AFPA…YNYQ), 431 to 454 (AFPA…YNYQ), 455 to 478 (AFPA…YNYQ), 479 to 502 (AFPA…YNYQ), and 503 to 526 (AFPA…YNYQ).

Belongs to the RRM DAZ family. As to quaternary structure, forms a heterodimer with BOLL and DAZL. Interacts with PUM2, DAZAP1, DAZAP2, DZIP1 and DZIP3. Testis specific.

The protein localises to the cytoplasm. The protein resides in the nucleus. Functionally, RNA-binding protein that plays an essential role in spermatogenesis. May act by binding to the 3'-UTR of mRNAs and regulating their translation. The polypeptide is Deleted in azoospermia protein 2 (DAZ2) (Homo sapiens (Human)).